Consider the following 218-residue polypeptide: Glutathione S-transferase class-mu 26 kDa isozyme 7 (218 aa).

One can recognise a GST N-terminal domain in the interval 2–83 (PAKLGYWKIR…YIADKHGMLG (82 aa)). Residues 7 to 8 (YW), 41 to 45 (WLGDK), 54 to 55 (NL), and 67 to 68 (QS) each bind glutathione. The 119-residue stretch at 85–203 (TPEERARISM…KSERFIKWPL (119 aa)) folds into the GST C-terminal domain. Substrate is bound at residue tyrosine 111.

Belongs to the GST superfamily. Mu family. Homodimer.

It carries out the reaction RX + glutathione = an S-substituted glutathione + a halide anion + H(+). In terms of biological role, conjugation of reduced glutathione to a wide number of exogenous and endogenous hydrophobic electrophiles. Its function is as follows. GST isoenzymes appear to play a central role in the parasite detoxification system. Other functions are also suspected including a role in increasing the solubility of haematin in the parasite gut. This Fasciola hepatica (Liver fluke) protein is Glutathione S-transferase class-mu 26 kDa isozyme 7.